We begin with the raw amino-acid sequence, 436 residues long: Histidinol dehydrogenase (436 aa).

Positions 135, 197, and 220 each coordinate NAD(+). Substrate-binding residues include Thr-243, Gln-265, and His-268. Zn(2+)-binding residues include Gln-265 and His-268. Active-site proton acceptor residues include Glu-334 and His-335. Positions 335, 368, 422, and 427 each coordinate substrate. Asp-368 is a Zn(2+) binding site. Residue His-427 coordinates Zn(2+).

This sequence belongs to the histidinol dehydrogenase family. It depends on Zn(2+) as a cofactor.

The enzyme catalyses L-histidinol + 2 NAD(+) + H2O = L-histidine + 2 NADH + 3 H(+). Its pathway is amino-acid biosynthesis; L-histidine biosynthesis; L-histidine from 5-phospho-alpha-D-ribose 1-diphosphate: step 9/9. Functionally, catalyzes the sequential NAD-dependent oxidations of L-histidinol to L-histidinaldehyde and then to L-histidine. This is Histidinol dehydrogenase from Deinococcus radiodurans (strain ATCC 13939 / DSM 20539 / JCM 16871 / CCUG 27074 / LMG 4051 / NBRC 15346 / NCIMB 9279 / VKM B-1422 / R1).